The following is a 752-amino-acid chain: Protein ORF24 (752 aa).

Belongs to the herpesviridae UL87 family. Interacts with ORF34.

Plays a role in the expression of late viral mRNAs together with ORF34. The polypeptide is Protein ORF24 (ORF24) (Homo sapiens (Human)).